The following is a 529-amino-acid chain: Bifunctional purine biosynthesis protein PurH (529 aa).

The 148-residue stretch at 1-148 (MNNARPIRRA…KNHKDTTIIV (148 aa)) folds into the MGS-like domain.

The protein belongs to the PurH family.

It catalyses the reaction (6R)-10-formyltetrahydrofolate + 5-amino-1-(5-phospho-beta-D-ribosyl)imidazole-4-carboxamide = 5-formamido-1-(5-phospho-D-ribosyl)imidazole-4-carboxamide + (6S)-5,6,7,8-tetrahydrofolate. The catalysed reaction is IMP + H2O = 5-formamido-1-(5-phospho-D-ribosyl)imidazole-4-carboxamide. It functions in the pathway purine metabolism; IMP biosynthesis via de novo pathway; 5-formamido-1-(5-phospho-D-ribosyl)imidazole-4-carboxamide from 5-amino-1-(5-phospho-D-ribosyl)imidazole-4-carboxamide (10-formyl THF route): step 1/1. It participates in purine metabolism; IMP biosynthesis via de novo pathway; IMP from 5-formamido-1-(5-phospho-D-ribosyl)imidazole-4-carboxamide: step 1/1. The protein is Bifunctional purine biosynthesis protein PurH of Shewanella pealeana (strain ATCC 700345 / ANG-SQ1).